Here is a 295-residue protein sequence, read N- to C-terminus: Signal-transducing adaptor protein 1 (295 aa).

The 97-residue stretch at 25–121 (PLYFEGFLLI…WRGFILTVTE (97 aa)) folds into the PH domain. Tyr168 bears the Phosphotyrosine mark. The region spanning 177-280 (ACFYTVSRKE…TDENTGQEPS (104 aa)) is the SH2 domain. The segment at 270–295 (STDENTGQEPSMEGRSEKLKKNPHIA) is disordered.

Interacts with KIT and CSF1R. Interacts with URI1; the interaction is phosphorylation-dependent and occurs in a growth-dependent manner. Phosphorylated on tyrosine by TEC. Phosphorylated on tyrosine by KIT.

It is found in the nucleus. The protein localises to the cytoplasm. It localises to the mitochondrion. In BCR signaling, appears to function as a docking protein acting downstream of TEC and participates in a positive feedback loop by increasing the activity of TEC. The chain is Signal-transducing adaptor protein 1 (STAP1) from Homo sapiens (Human).